A 327-amino-acid polypeptide reads, in one-letter code: Opticin (327 aa).

A signal peptide spans 1 to 19; sequence MKLPAFLSLLALVLLEAGT. Residues Y61 and Y67 each carry the sulfotyrosine modification. Positions 111 to 148 constitute an LRRNT domain; that stretch reads VLGSPNSHGLPTCLICVCLGSSVYCDDADLENIPPLPK. LRR repeat units follow at residues 149–170, 173–194, 197–218, 219–237, 243–263, 264–285, and 295–315; these read TTTYLYARFNRIRRIRAGDFKG, KLKRIDLSSNSISSIDDDALRL, ALQDLILPENQLAALPALPPAI, EVLDARHNQLQSSGIQPEA, KLQFLYLADNLLDSIPGPLPP, SLRSLHLQNNLIETMQTDAFCD, and WLEDIRLDGNPINLGLFPSAY. C284 and C317 are joined by a disulfide.

The protein belongs to the small leucine-rich proteoglycan (SLRP) family. SLRP class III subfamily. In terms of assembly, homodimer. O-glycosylated. In terms of processing, proteolytically cleaved by MMP1, MMP2, MMP3, MMP7, MMP8, MMP9, ADAMTS4, and ADAMTS5. Proteolytically cleaved by MMP13. Post-translationally, sulfated on tyrosine residues. As to expression, ocular tissues, cartilage, ligament, skin, muscle and testes.

It localises to the secreted. The protein localises to the extracellular space. It is found in the extracellular matrix. Inhibits angiogenesis in the vitreous humor of the eye, and therefore represses neovascularization. Binds collagen fibrils. May be involved in collagen fiber organization via regulation of other members of the small leucine-rich repeat proteoglycan superfamily. The protein is Opticin (OPTC) of Canis lupus familiaris (Dog).